The sequence spans 567 residues: MKAVIVFCLMALSIVDAAWKPLPENLKEDLIVYQVYPRSFKDSNGDGIGDIEGIKEKLDHFLEMGVDMFWLSPIYPSPMVDFGYDISNYTDVHPIFGTISDLDNLVSAAHEKGLKIILDFVPNHTSDQHEWFQLSLKNIEPYNNYYIWHPGKIVNGKRVPPTNWVGVFGGSAWSWREERQAYYLHQFAPEQPDLNYYNPVVLDDMQNVLRFWLRRGFDGFRVDALPYICEDMRFLDEPLSGETNDPNKTEYTLKIYTHDIPETYNVVRKFRDVLDEFPQPKHMLIEAYTNLSMTMKYYDYGADFPFNFAFIKNVSRDSNSSDFKKLVDNWMTYMPPSGIPNWVPGNHDQLRLVSRFGEEKARMITTMSLLLPGVAVNYYGDEIGMSDTYISWEDTQDPQGCGAGKENYQTMSRDPARTPFQWDDSVSAGFSSSSNTWLRVNENYKTVNLAAEKKDKNSFFNMFKKFASLKKSPYFKEANLNTRMLNDNVFAFSRETEDNGSLYAILNFSNEEQIVDLKAFNNVPKKLNMFYNNFNSDIKSISNNEQVKVSALGFFILISQDAKFGNF.

Residues 1–17 form the signal peptide; that stretch reads MKAVIVFCLMALSIVDA. Asn88 and Asn123 each carry an N-linked (GlcNAc...) asparagine glycan. The Nucleophile role is filled by Asp223. N-linked (GlcNAc...) asparagine glycosylation is present at Asn247. The active-site Proton donor is the Glu286. Asn290, Asn313, Asn319, Asn499, and Asn507 each carry an N-linked (GlcNAc...) asparagine glycan.

In terms of assembly, monomer. Expressed specifically in the hypopharyngeal glands of worker bees. Also found in the brain of worker bees (at protein level).

It catalyses the reaction Hydrolysis of terminal, non-reducing (1-&gt;4)-linked alpha-D-glucose residues with release of alpha-D-glucose.. Functionally, converts sucrose in nectar to glucose and fructose. The protein is Alpha-glucosidase of Apis mellifera (Honeybee).